The primary structure comprises 535 residues: Hrp65 protein (535 aa).

The interval 1–80 (MDVKAEAPNG…GMGPRGPMKN (80 aa)) is disordered. Low complexity-rich tracts occupy residues 27–42 (ENMN…QNNN) and 50–64 (NKRN…FQNR). Residues 65–74 (GGKGGPGMGP) show a composition bias toward gly residues. RRM domains are found at residues 113-185 (NRLY…FAPN) and 187-268 (TTIR…TFDH). Disordered stretches follow at residues 346 to 411 (EHET…RRQQ) and 429 to 535 (QEMN…RRRY). The span at 434–459 (QGGGGGGGNGGNGNNQGGGGNQGGGR) shows a compositional bias: gly residues. The span at 486 to 502 (GNQYQGNQHYQGNQDQG) shows a compositional bias: low complexity. The span at 521-535 (DRGHRDDFQNKRRRY) shows a compositional bias: basic and acidic residues.

It localises to the cytoplasm. The protein resides in the cytoskeleton. It is found in the nucleus. Component of nuclear connecting fibers associated with the transport of ribonucleoprotein particles from either the chromosome to the nuclear pore complex or their transient retention in the nucleoplasm. This Chironomus tentans (Midge) protein is Hrp65 protein (HRP65).